Reading from the N-terminus, the 223-residue chain is Thymine-DNA glycosylase (223 aa).

[4Fe-4S] cluster contacts are provided by C201, C208, C211, and C217.

Belongs to the Nth/MutY family. It depends on [4Fe-4S] cluster as a cofactor.

The catalysed reaction is Hydrolyzes mismatched double-stranded DNA and polynucleotides, releasing free thymine.. Thymine cleavage is completely inhibited by Ni(2+), Co(2+), Zn(2+), Cu(2+) and Mn(2+). Activity is not affected by Mg(2+) and Ca(2+). DNA glycosylase that excises thymine from T/G mismatches. Also has a weak DNA glycosylase activity on uracil paired with various bases. The protein is Thymine-DNA glycosylase of Aeropyrum pernix (strain ATCC 700893 / DSM 11879 / JCM 9820 / NBRC 100138 / K1).